A 119-amino-acid chain; its full sequence is Ribosome-binding factor A (119 aa).

This sequence belongs to the RbfA family. In terms of assembly, monomer. Binds 30S ribosomal subunits, but not 50S ribosomal subunits or 70S ribosomes.

It localises to the cytoplasm. In terms of biological role, one of several proteins that assist in the late maturation steps of the functional core of the 30S ribosomal subunit. Associates with free 30S ribosomal subunits (but not with 30S subunits that are part of 70S ribosomes or polysomes). Required for efficient processing of 16S rRNA. May interact with the 5'-terminal helix region of 16S rRNA. In Ligilactobacillus salivarius (strain UCC118) (Lactobacillus salivarius), this protein is Ribosome-binding factor A.